The sequence spans 687 residues: C-mannosyltransferase dpy-19 (687 aa).

The next 11 membrane-spanning stretches (helical) occupy residues 24–44 (GISG…VGFL), 170–190 (ITGV…LGVL), 191–211 (VSDS…NHGE), 223–243 (ESFA…IIKY), 253–273 (LLIS…FAFF), 276–296 (ICSI…AKTI), 303–323 (AFFI…ALYF), 324–344 (PSIW…GIRL), 347–367 (LYLL…KVGF), 415–435 (LSST…SWDF), and 454–474 (GEVI…VLIM).

It belongs to the dpy-19 family.

It is found in the endoplasmic reticulum membrane. Its function is as follows. C-mannosyltransferase that mediates C-mannosylation of tryptophan residues on target proteins such as unc-5 and mig-21. Mediates the attachment of alpha-mannose in C-C linkage to the C2 of the indole ring of tryptophan. C-mannosylation takes place in the endoplasmic reticulum and frequently found in thrombospondin (TSP) type-1 repeats and in the WSXWS motif of type I cytokine receptors. Required to orient neuroblasts QL and QR correctly on the anterior/posterior (A/P) axis: QL and QR are born in the same A/P position, but polarize and migrate left/right asymmetrically, QL migrates toward the posterior and QR migrates toward the anterior. Required with unc-40 to express mab-5 correctly in the Q cell descendants. The sequence is that of C-mannosyltransferase dpy-19 from Caenorhabditis briggsae.